A 124-amino-acid polypeptide reads, in one-letter code: Small ribosomal subunit protein uS12 (124 aa).

The interval 1–32 is disordered; it reads MPTIQQLVRKGRQDKVEKTKTPALKGSPQRRG. Basic and acidic residues predominate over residues 11–20; the sequence is GRQDKVEKTK. A 3-methylthioaspartic acid modification is found at Asp89.

It belongs to the universal ribosomal protein uS12 family. In terms of assembly, part of the 30S ribosomal subunit. Contacts proteins S8 and S17. May interact with IF1 in the 30S initiation complex.

Functionally, with S4 and S5 plays an important role in translational accuracy. Its function is as follows. Interacts with and stabilizes bases of the 16S rRNA that are involved in tRNA selection in the A site and with the mRNA backbone. Located at the interface of the 30S and 50S subunits, it traverses the body of the 30S subunit contacting proteins on the other side and probably holding the rRNA structure together. The combined cluster of proteins S8, S12 and S17 appears to hold together the shoulder and platform of the 30S subunit. This is Small ribosomal subunit protein uS12 from Frankia alni (strain DSM 45986 / CECT 9034 / ACN14a).